Reading from the N-terminus, the 101-residue chain is Urease subunit beta (101 aa).

The protein belongs to the urease beta subunit family. As to quaternary structure, heterotrimer of UreA (gamma), UreB (beta) and UreC (alpha) subunits. Three heterotrimers associate to form the active enzyme.

It localises to the cytoplasm. It carries out the reaction urea + 2 H2O + H(+) = hydrogencarbonate + 2 NH4(+). The protein operates within nitrogen metabolism; urea degradation; CO(2) and NH(3) from urea (urease route): step 1/1. The protein is Urease subunit beta of Rhizobium etli (strain CIAT 652).